We begin with the raw amino-acid sequence, 430 residues long: GTPase Obg (430 aa).

In terms of domain architecture, Obg spans 1–158; the sequence is MFVDQVKISL…LEVTLELKLL (158 aa). The segment at 118–145 is disordered; it reads RGGRGGRGNSRFATPRNPAPDFSENGEP. An OBG-type G domain is found at 159–329; the sequence is ADVGLVGFPS…LLYQIADKLE (171 aa). Residues 165-172, 190-194, 212-215, 282-285, and 310-312 contribute to the GTP site; these read GFPSVGKS, FTTIK, DLPG, NKMD, and STI. Residues Ser-172 and Thr-192 each contribute to the Mg(2+) site. Residues 352-430 form the OCT domain; the sequence is KHTPSADKFT…ILGGEFEFVE (79 aa).

The protein belongs to the TRAFAC class OBG-HflX-like GTPase superfamily. OBG GTPase family. As to quaternary structure, monomer. Mg(2+) serves as cofactor.

It is found in the cytoplasm. Its function is as follows. An essential GTPase which binds GTP, GDP and possibly (p)ppGpp with moderate affinity, with high nucleotide exchange rates and a fairly low GTP hydrolysis rate. Plays a role in control of the cell cycle, stress response, ribosome biogenesis and in those bacteria that undergo differentiation, in morphogenesis control. In Staphylococcus epidermidis (strain ATCC 35984 / DSM 28319 / BCRC 17069 / CCUG 31568 / BM 3577 / RP62A), this protein is GTPase Obg.